The chain runs to 740 residues: F-BAR and double SH3 domains protein 2 (740 aa).

The F-BAR domain occupies 8-282; the sequence is VKVTQELKNI…NSSKVVRDYN (275 aa). The interval 303–323 is disordered; that stretch reads PCDSDTSRQLESETGTTEEHS. Residues 307–323 show a composition bias toward basic and acidic residues; the sequence is DTSRQLESETGTTEEHS. Residues 356-397 are a coiled coil; that stretch reads GAAVSEQSRAELEQKIDEARENIRKAEIIKLKAEARLDLLKQ. 2 consecutive SH3 domains span residues 469–530 and 567–629; these read NYPL…FPTS and ASVC…ELSA. A required and sufficient for location at clathrin-coated pits region spans residues 567–629; sequence ASVCFVKALY…PSVLVEELSA (63 aa). The tract at residues 633–740 is disordered; it reads GDTPWMREIQ…KIEDVEITLV (108 aa). A compositionally biased stretch (pro residues) spans 646-657; that stretch reads SPKPHASLPPLP. A phosphoserine mark is found at S675 and S681.

In terms of assembly, homodimer. Interacts (via SH3 domain 2) with ITSN1 (via SH3 domain 4). Recruited to clathrin-coated pits during a mid-to-late stage of assembly via interaction with ITSN1. Interacts (via SH3 domain 1) with WASL. Interacts with WAS. Interacts with CASK and MAGI1. CASK inhibits interaction with MAGI1. In terms of processing, phosphorylated. Phosphorylation on a Ser residue is important for recruitment to the cell membrane and for its role in promoting endocytosis. Liver, brain, heart, placenta, skeletal muscle, pancreas, lung and kidney.

It localises to the cytoplasm. The protein resides in the cell junction. The protein localises to the membrane. Its subcellular location is the clathrin-coated pit. It is found in the cell membrane. It localises to the cell projection. The protein resides in the stereocilium. Functionally, adapter protein that plays a role in endocytosis via clathrin-coated pits. Contributes to the internalization of cell surface receptors, such as integrin ITGB1 and transferrin receptor. Promotes endocytosis of EGFR in cancer cells, and thereby contributes to the down-regulation of EGFR signaling. Recruited to clathrin-coated pits during a mid-to-late stage of assembly, where it is required for normal progress from U-shaped intermediate stage pits to terminal, omega-shaped pits. Binds to membranes enriched in phosphatidylinositol 3,4-bisphosphate or phosphatidylinositol 3,4,5-trisphosphate. When bound to membranes, promotes actin polymerization via its interaction with WAS and/or WASL which leads to the activation of the Arp2/3 complex. Does not promote actin polymerisation in the absence of membranes. The polypeptide is F-BAR and double SH3 domains protein 2 (FCHSD2) (Homo sapiens (Human)).